The following is a 565-amino-acid chain: uncharacterized protein (565 aa).

An N-terminal signal peptide occupies residues M1–S21. N-linked (GlcNAc...) asparagine glycans are attached at residues N46 and N88. An FAD-binding PCMH-type domain is found at Q118–K302. H155 carries the post-translational modification Pros-8alpha-FAD histidine. N191, N314, N364, N371, and N484 each carry an N-linked (GlcNAc...) asparagine glycan.

The protein belongs to the oxygen-dependent FAD-linked oxidoreductase family. FAD serves as cofactor.

Its subcellular location is the secreted. This is an uncharacterized protein from Arthroderma benhamiae (strain ATCC MYA-4681 / CBS 112371) (Trichophyton mentagrophytes).